The chain runs to 506 residues: GMP synthase [glutamine-hydrolyzing] (506 aa).

Positions 4–192 (KLIILDFGSQ…FLDICGMKRD (189 aa)) constitute a Glutamine amidotransferase type-1 domain. C79 serves as the catalytic Nucleophile. Catalysis depends on residues H167 and E169. Positions 193-381 (WTPASFIEAT…LGMMPHLIHR (189 aa)) constitute a GMPS ATP-PPase domain. An ATP-binding site is contributed by 220–226 (SGGVDSS).

Homodimer.

It carries out the reaction XMP + L-glutamine + ATP + H2O = GMP + L-glutamate + AMP + diphosphate + 2 H(+). Its pathway is purine metabolism; GMP biosynthesis; GMP from XMP (L-Gln route): step 1/1. Functionally, catalyzes the synthesis of GMP from XMP. The polypeptide is GMP synthase [glutamine-hydrolyzing] (Porphyromonas gingivalis (strain ATCC BAA-308 / W83)).